We begin with the raw amino-acid sequence, 247 residues long: Type II restriction enzyme SmaI (247 aa).

Mg(2+) is required as a cofactor. Requires K(+) as cofactor.

The catalysed reaction is Endonucleolytic cleavage of DNA to give specific double-stranded fragments with terminal 5'-phosphates.. Its function is as follows. A P subtype restriction enzyme that recognizes the double-stranded sequence 5'-CCCGGG-3' and cleaves after C-3. The protein is Type II restriction enzyme SmaI (smaIR) of Serratia marcescens.